The chain runs to 298 residues: Enoyl-CoA hydratase AFT6-1 (298 aa).

The disordered stretch occupies residues 1-39; sequence MTYSTTKSVAMNPDEDAPPSDINSSGRLMSHSEVEPRGN.

This sequence belongs to the enoyl-CoA hydratase/isomerase family.

The enzyme catalyses a (3S)-3-hydroxyacyl-CoA = a (2E)-enoyl-CoA + H2O. It carries out the reaction a 4-saturated-(3S)-3-hydroxyacyl-CoA = a (3E)-enoyl-CoA + H2O. It functions in the pathway mycotoxin biosynthesis. Enoyl-CoA hydratase; part of the gene clusters that mediate the biosynthesis of the host-selective toxins (HSTs) AF-toxins responsible for Alternaria black spot of strawberry disease by the strawberry pathotype. AF-toxin I and III are valine derivatives of 2,3-dyhydroxy-isovaleric acid and 2-hydroxy-isovaleric acid respectively, while AF II is an isoleucine derivative of 2-hydroxy-valeric acid. These derivatives are bound to a 9,10-epoxy-8-hydroxy-9-methyl-decatrienoic acid (EDA) moiety. On cellular level, AF-toxin affects plasma membrane of susceptible cells and cause a sudden increase in loss of K(+) after a few minutes of toxin treatment. The aldo-keto reductase AFTS1 catalyzes the conversion of 2-keto-isovaleric acid (2-KIV) to 2-hydroxy-isovaleric acid (2-HIV) by reduction of its ketone to an alcohol. The acyl-CoA ligase AFT1, the hydrolase AFT2 and the enoyl-CoA hydratases AFT3 and AFT6, but also the polyketide synthase AFT9, the acyl-CoA dehydrogenase AFT10, the cytochrome P450 monooxygenase AFT11 and the oxidoreductase AFT12 are all involved in the biosynthesis of the AK-, AF- and ACT-toxin common EDA structural moiety. The exact function of each enzyme, and of additional enzymes identified within the AF-toxin clusters have still to be determined. In Alternaria alternata (Alternaria rot fungus), this protein is Enoyl-CoA hydratase AFT6-1.